A 247-amino-acid polypeptide reads, in one-letter code: CDP-diacylglycerol pyrophosphatase (247 aa).

A helical transmembrane segment spans residues 5 to 22 (IVLALVVSVAVAGGWLWM).

It belongs to the Cdh family.

It localises to the cell inner membrane. The catalysed reaction is a CDP-1,2-diacyl-sn-glycerol + H2O = a 1,2-diacyl-sn-glycero-3-phosphate + CMP + 2 H(+). The protein operates within phospholipid metabolism; CDP-diacylglycerol degradation; phosphatidate from CDP-diacylglycerol: step 1/1. This is CDP-diacylglycerol pyrophosphatase from Enterobacter sp. (strain 638).